Reading from the N-terminus, the 204-residue chain is Large ribosomal subunit protein uL4 (204 aa).

A disordered region spans residues Thr49–Ser75.

It belongs to the universal ribosomal protein uL4 family. As to quaternary structure, part of the 50S ribosomal subunit.

Its function is as follows. One of the primary rRNA binding proteins, this protein initially binds near the 5'-end of the 23S rRNA. It is important during the early stages of 50S assembly. It makes multiple contacts with different domains of the 23S rRNA in the assembled 50S subunit and ribosome. Forms part of the polypeptide exit tunnel. The polypeptide is Large ribosomal subunit protein uL4 (Campylobacter jejuni (strain RM1221)).